The sequence spans 374 residues: 4-hydroxy-3-methylbut-2-en-1-yl diphosphate synthase (flavodoxin) (374 aa).

Positions 268, 271, 303, and 310 each coordinate [4Fe-4S] cluster.

This sequence belongs to the IspG family. [4Fe-4S] cluster serves as cofactor.

The enzyme catalyses (2E)-4-hydroxy-3-methylbut-2-enyl diphosphate + oxidized [flavodoxin] + H2O + 2 H(+) = 2-C-methyl-D-erythritol 2,4-cyclic diphosphate + reduced [flavodoxin]. Its pathway is isoprenoid biosynthesis; isopentenyl diphosphate biosynthesis via DXP pathway; isopentenyl diphosphate from 1-deoxy-D-xylulose 5-phosphate: step 5/6. Converts 2C-methyl-D-erythritol 2,4-cyclodiphosphate (ME-2,4cPP) into 1-hydroxy-2-methyl-2-(E)-butenyl 4-diphosphate. This is 4-hydroxy-3-methylbut-2-en-1-yl diphosphate synthase (flavodoxin) from Geobacillus thermodenitrificans (strain NG80-2).